The following is a 305-amino-acid chain: Non-homologous end joining protein Ku (305 aa).

The Ku domain occupies serine 16–alanine 202. The interval glycine 263 to alanine 305 is disordered.

The protein belongs to the prokaryotic Ku family. Homodimer. Interacts with LigD.

Functionally, with LigD forms a non-homologous end joining (NHEJ) DNA repair enzyme, which repairs dsDNA breaks with reduced fidelity. Binds linear dsDNA with 5'- and 3'- overhangs but not closed circular dsDNA nor ssDNA. Recruits and stimulates the ligase activity of LigD. The chain is Non-homologous end joining protein Ku from Acidobacterium capsulatum (strain ATCC 51196 / DSM 11244 / BCRC 80197 / JCM 7670 / NBRC 15755 / NCIMB 13165 / 161).